A 179-amino-acid polypeptide reads, in one-letter code: MAKLHDKYQETVVAELAKKFGYTSVMQVPRIEKITLNMGVGEAVADKKVMEHALRDMTAIAGQKPVVTVARKSVAGFKIREGYPIGCKVTLRGERMWEFLERLVDIAIPRIRDFRGLSAKAFDGRGNYAMGVREQIIFPEIDYDKIDKIRGMDIVITTSAKTDEEGRALLDAFNFPFKK.

It belongs to the universal ribosomal protein uL5 family. In terms of assembly, part of the 50S ribosomal subunit; part of the 5S rRNA/L5/L18/L25 subcomplex. Contacts the 5S rRNA and the P site tRNA. Forms a bridge to the 30S subunit in the 70S ribosome.

Its function is as follows. This is one of the proteins that bind and probably mediate the attachment of the 5S RNA into the large ribosomal subunit, where it forms part of the central protuberance. In the 70S ribosome it contacts protein S13 of the 30S subunit (bridge B1b), connecting the 2 subunits; this bridge is implicated in subunit movement. Contacts the P site tRNA; the 5S rRNA and some of its associated proteins might help stabilize positioning of ribosome-bound tRNAs. In Shewanella putrefaciens (strain CN-32 / ATCC BAA-453), this protein is Large ribosomal subunit protein uL5.